The chain runs to 297 residues: Probable oxidoreductase (297 aa).

9 to 33 contributes to the NAD(+) binding site; that stretch reads VVTGGASGLGAETVRALAAAGAEVT. Substrate is bound at residue S138. The active-site Proton acceptor is Y164.

Belongs to the short-chain dehydrogenases/reductases (SDR) family.

The protein is Probable oxidoreductase of Streptomyces lividans.